The sequence spans 298 residues: 4-diphosphocytidyl-2-C-methyl-D-erythritol kinase (298 aa).

Lysine 19 is an active-site residue. Proline 106–alanine 116 provides a ligand contact to ATP. The active site involves aspartate 148.

Belongs to the GHMP kinase family. IspE subfamily.

The catalysed reaction is 4-CDP-2-C-methyl-D-erythritol + ATP = 4-CDP-2-C-methyl-D-erythritol 2-phosphate + ADP + H(+). Its pathway is isoprenoid biosynthesis; isopentenyl diphosphate biosynthesis via DXP pathway; isopentenyl diphosphate from 1-deoxy-D-xylulose 5-phosphate: step 3/6. In terms of biological role, catalyzes the phosphorylation of the position 2 hydroxy group of 4-diphosphocytidyl-2C-methyl-D-erythritol. This is 4-diphosphocytidyl-2-C-methyl-D-erythritol kinase from Rhizobium leguminosarum bv. trifolii (strain WSM2304).